The primary structure comprises 577 residues: Outer spore wall assembly protein SHE10 (577 aa).

An N-terminal signal peptide occupies residues 1 to 23; the sequence is MGKLIKLITTLTVLVSLLQYCCE. Coiled-coil stretches lie at residues 379–416 and 513–561; these read NETR…ENVE and ILRS…EEDV. Over residues 525–545 the composition is skewed to basic and acidic residues; that stretch reads RERKERERKEREKAAAEEFQR. Residues 525-577 are disordered; it reads RERKERERKEREKAAAEEFQRQQELLLQQEEEDEEDVSYTSTSTITTTTTMTL. Low complexity predominate over residues 562–577; that stretch reads SYTSTSTITTTTTMTL.

The protein belongs to the SHE10 family. As to quaternary structure, component of the mitochondria-localized RNase mitochondrial RNA-processing (RNase MRP) composed of one single RNA encoded by the NME1 gene and at least 31 proteins. Absent in the nucleus-localized RNase MRP (NuMRP).

The protein localises to the mitochondrion. Functionally, involved in spore wall assembly. May be a component of the mitochondrial RNase MRP (MtMRP), a ribonucleoprotein endoribonuclease involved in the cleaving RNA transcripts to generate primers for DNA replication in mitochondria. This is Outer spore wall assembly protein SHE10 from Saccharomyces cerevisiae (strain JAY291) (Baker's yeast).